A 496-amino-acid polypeptide reads, in one-letter code: Glycerol kinase (496 aa).

Threonine 12 is an ADP binding site. Residues threonine 12, threonine 13, and serine 14 each contribute to the ATP site. Position 12 (threonine 12) interacts with sn-glycerol 3-phosphate. Position 16 (arginine 16) interacts with ADP. Sn-glycerol 3-phosphate-binding residues include arginine 82, glutamate 83, and tyrosine 134. Positions 82, 83, and 134 each coordinate glycerol. Histidine 230 carries the post-translational modification Phosphohistidine; by HPr. Aspartate 244 is a sn-glycerol 3-phosphate binding site. Residues aspartate 244 and glutamine 245 each coordinate glycerol. ADP-binding residues include threonine 266 and glycine 309. ATP is bound by residues threonine 266, glycine 309, glutamine 313, and glycine 410. 2 residues coordinate ADP: glycine 410 and asparagine 414.

Belongs to the FGGY kinase family. Post-translationally, the phosphoenolpyruvate-dependent sugar phosphotransferase system (PTS), including enzyme I, and histidine-containing protein (HPr) are required for the phosphorylation of, which leads to the activation of the enzyme.

It carries out the reaction glycerol + ATP = sn-glycerol 3-phosphate + ADP + H(+). It participates in polyol metabolism; glycerol degradation via glycerol kinase pathway; sn-glycerol 3-phosphate from glycerol: step 1/1. Inhibited by fructose 1,6-bisphosphate and p-chloromercuribenzoate (PCMB). Its function is as follows. Key enzyme in the regulation of glycerol uptake and metabolism. Catalyzes the phosphorylation of glycerol to yield sn-glycerol 3-phosphate. The polypeptide is Glycerol kinase (Thermus thermophilus).